The chain runs to 123 residues: Small ribosomal subunit protein uS12 (123 aa).

Positions 1–32 (MPTIQQLVRKGRKDKKAKVKTAALKGSPQRRG) are disordered. Positions 9–19 (RKGRKDKKAKV) are enriched in basic residues. 3-methylthioaspartic acid is present on D89.

Belongs to the universal ribosomal protein uS12 family. As to quaternary structure, part of the 30S ribosomal subunit. Contacts proteins S8 and S17. May interact with IF1 in the 30S initiation complex.

Functionally, with S4 and S5 plays an important role in translational accuracy. In terms of biological role, interacts with and stabilizes bases of the 16S rRNA that are involved in tRNA selection in the A site and with the mRNA backbone. Located at the interface of the 30S and 50S subunits, it traverses the body of the 30S subunit contacting proteins on the other side and probably holding the rRNA structure together. The combined cluster of proteins S8, S12 and S17 appears to hold together the shoulder and platform of the 30S subunit. The sequence is that of Small ribosomal subunit protein uS12 from Corynebacterium kroppenstedtii (strain DSM 44385 / JCM 11950 / CIP 105744 / CCUG 35717).